The sequence spans 165 residues: Large ribosomal subunit protein uL10 (165 aa).

Belongs to the universal ribosomal protein uL10 family. In terms of assembly, part of the ribosomal stalk of the 50S ribosomal subunit. The N-terminus interacts with L11 and the large rRNA to form the base of the stalk. The C-terminus forms an elongated spine to which L12 dimers bind in a sequential fashion forming a multimeric L10(L12)X complex.

In terms of biological role, forms part of the ribosomal stalk, playing a central role in the interaction of the ribosome with GTP-bound translation factors. In Yersinia pseudotuberculosis serotype IB (strain PB1/+), this protein is Large ribosomal subunit protein uL10.